The sequence spans 311 residues: Olfactory receptor 10G9 (311 aa).

Residues 1–23 (MSKTSLVTAFILTGLPHAPGLDA) are Extracellular-facing. Residues 24 to 44 (PLFGIFLVVYVLTVLGNLLIL) traverse the membrane as a helical segment. Over 45 to 52 (LVIRVDSH) the chain is Cytoplasmic. Residues 53-73 (LHTPMYYFLTNLSFIDMWFST) traverse the membrane as a helical segment. Residues 74 to 98 (VTVPKMLMTLVSPSGRAISFHSCVA) are Extracellular-facing. An intrachain disulfide couples C96 to C188. Residues 99 to 119 (QLYFFHFLGSTECFLYTVMSY) traverse the membrane as a helical segment. At 120–138 (DRYLAISYPLRYTSMMSGS) the chain is on the cytoplasmic side. The chain crosses the membrane as a helical span at residues 139–159 (RCALLATSTWLSGSLHSAVQT). Residues 160-196 (ILTFHLPYCGPNQIQHYLCDAPPILKLACADTSANEM) are Extracellular-facing. Residues 197–216 (VIFVDIGLVASGCFLLIVLS) traverse the membrane as a helical segment. Topologically, residues 217–236 (YVSIVCSILRIHTSEGRHRA) are cytoplasmic. Residues 237-257 (FQTCASHCIVVLCFFVPCVFI) form a helical membrane-spanning segment. The Extracellular portion of the chain corresponds to 258–268 (YLRPGSRDVVD). The chain crosses the membrane as a helical span at residues 269–289 (GVVAIFYTVLTPLLNPVVYTL). Residues 290-311 (RNKEVKKAVLKLRDKVAHSQGE) are Cytoplasmic-facing.

It belongs to the G-protein coupled receptor 1 family.

The protein resides in the cell membrane. Functionally, odorant receptor. The chain is Olfactory receptor 10G9 (OR10G9) from Homo sapiens (Human).